Consider the following 311-residue polypeptide: Trem-like transcript 1 protein (311 aa).

The first 15 residues, 1 to 15 (MGLTLLLLLLLGLEG), serve as a signal peptide directing secretion. The region spanning 16–121 (QGIVGSLPEV…PQILHRVSLN (106 aa)) is the Ig-like V-type domain. Topologically, residues 16–162 (QGIVGSLPEV…EPSQDEKSIP (147 aa)) are extracellular. Cystine bridges form between cysteine 38/cysteine 104 and cysteine 52/cysteine 59. The helical transmembrane segment at 163 to 183 (LIWGAVLLVGLLVAAVVLFAV) threads the bilayer. Over 184–311 (MAKRKQGNRL…NPPNNQTPSS (128 aa)) the chain is Cytoplasmic. Cysteine 196 carries the S-palmitoyl cysteine lipid modification. The tract at residues 229–263 (VPHIRLDSPPSFDNTTYTSLPLDSPSGKPSLPAPS) is disordered. The segment covering 239–249 (SFDNTTYTSLP) has biased composition (polar residues). The ITIM signature appears at 279-284 (VTYATV). The interval 287 to 311 (PGGNKGGGTSCGPAQNPPNNQTPSS) is disordered.

As to quaternary structure, when phosphorylated, interacts with PTPN6. When phosphorylated, interacts with PTPN11. In terms of processing, phosphorylated on tyrosine residues. As to expression, detected in platelets, monocytic leukemia and in T-cell leukemia.

Its subcellular location is the cell membrane. It is found in the cytoplasm. In terms of biological role, cell surface receptor that may play a role in the innate and adaptive immune response. The chain is Trem-like transcript 1 protein (TREML1) from Homo sapiens (Human).